Consider the following 421-residue polypeptide: 3-isopropylmalate dehydratase large subunit (421 aa).

C302, C362, and C365 together coordinate [4Fe-4S] cluster.

Belongs to the aconitase/IPM isomerase family. LeuC type 2 subfamily. In terms of assembly, heterodimer of LeuC and LeuD. It depends on [4Fe-4S] cluster as a cofactor.

It catalyses the reaction (2R,3S)-3-isopropylmalate = (2S)-2-isopropylmalate. Its pathway is amino-acid biosynthesis; L-leucine biosynthesis; L-leucine from 3-methyl-2-oxobutanoate: step 2/4. In terms of biological role, catalyzes the isomerization between 2-isopropylmalate and 3-isopropylmalate, via the formation of 2-isopropylmaleate. In Campylobacter curvus (strain 525.92), this protein is 3-isopropylmalate dehydratase large subunit.